We begin with the raw amino-acid sequence, 495 residues long: Bile acid-sensitive ion channel (495 aa).

A binds the plasma membrane and stabilizes the channel in the closed state region spans residues 1 to 30; the sequence is MEHTEKSKGPAEKGLLGKIRRYLSKRPLPS. The Cytoplasmic portion of the chain corresponds to 1–61; that stretch reads MEHTEKSKGP…NIAQNQNKVR (61 aa). The helical transmembrane segment at 62–82 threads the bilayer; it reads KVIWLSVVLGSVSLLVWQIYS. Residues 83 to 459 are Extracellular-facing; that stretch reads RLVNYFMWPT…GLFCGASLIT (377 aa). Disulfide bonds link C112–C207, C185–C192, C298–C377, C315–C373, C328–C350, and C330–C342. N-linked (GlcNAc...) asparagine glycans are attached at residues N147 and N163. N306 is a glycosylation site (N-linked (GlcNAc...) asparagine). 3 N-linked (GlcNAc...) asparagine glycosylation sites follow: N370, N405, and N421. Positions 454-456 match the GAS motif; ion selectivity filter motif; it reads GAS. The chain crosses the membrane as a helical span at residues 460-480; the sequence is IIEIIEYLFTSFYWVFIFFLL. The Cytoplasmic segment spans residues 481–495; sequence KILEMIQRTSPPQTV.

This sequence belongs to the amiloride-sensitive sodium channel (TC 1.A.6) family. ASIC5 subfamily. Forms homotrimeric channels. In terms of tissue distribution, expressed by cholangiocytes (at protein level). Detected in brain, liver, duodenum, jejunum, ileum and testis.

It is found in the apical cell membrane. The protein localises to the cell membrane. The enzyme catalyses Na(+)(in) = Na(+)(out). The catalysed reaction is Li(+)(in) = Li(+)(out). It catalyses the reaction K(+)(in) = K(+)(out). It carries out the reaction H(+)(in) = H(+)(out). Its activity is regulated as follows. Inhibited by the diuretic drug amiloride. Inhibited by diminazene. Inhibited by extracellular Ca(2+). Forms bile acid-gated sodium channels and may play a role in bile acid-dependent absorption and secretion by epithelial cells of the bile ducts. Displays high selectivity for sodium ions but can also permit the permeation of other cations. The gating could be indirect and the consequence of alterations of the membrane environment of the channel by bile acids. As a sodium channel of type II unipolar brush cells of the vestibulocerebellum, controlling the electrical activity of these cells, could play a role in motor coordination and balance. The polypeptide is Bile acid-sensitive ion channel (Rattus norvegicus (Rat)).